Here is a 557-residue protein sequence, read N- to C-terminus: MNWLRNSLIAAILVITYVLFIRWNEFSERQQVPTIANQPAAVTTPAYEAVPSDDAVASSATEESDVPEVSVSAEPVAAPKAVYQPKLVTVKTDVLEVQIDTNGGDVLQVVLLKHLADKADDNQPFVLMTQNSAHTYVARSGLAGGNGPDGAKKGRAKYSVAKTNYSLNSDDQVVVDLTLDQENAQITKRFTFTKSSYLIDVEYIITNRADTPWAAKLYGQIIRDGSEPSYGYMGMRPYLGAAITTPEVNYEKVSFDDMDDGPFKVEQKGGWVSLIQHYFISAWIPPKDATNSYELSKSSKGNYVLRFISETTTVAPHSVGTVKAGFYAGPKNIRRLEEISPHLDLTIDYSFLWFIAKPLFFALDFIHGLVGNWGVAIILLTVLIKAVFFYPSAMSYRSMAKMRKLQPMMAELKERYGEDKQKMSGELMKLYKKEKVNPFGGCLPILLQMPVFISLYWMIMESVELRHQPFFLWIQDLSVKDPLFILPLLMGVTMYIQQKLNPTPPDPMQAKVMQMMPIGFTFLFMFFPAGLVLYWVVNNTLSISQQYVITRNIEKAG.

Residues 1-21 (MNWLRNSLIAAILVITYVLFI) traverse the membrane as a helical segment. The interval 52–71 (SDDAVASSATEESDVPEVSV) is disordered. 5 helical membrane-spanning segments follow: residues 346 to 366 (TIDYSFLWFIAKPLFFALDFI), 369 to 389 (LVGNWGVAIILLTVLIKAVFF), 439 to 459 (FGGCLPILLQMPVFISLYWMI), 470 to 490 (FFLWIQDLSVKDPLFILPLLM), and 517 to 537 (PIGFTFLFMFFPAGLVLYWVV).

Belongs to the OXA1/ALB3/YidC family. Type 1 subfamily. As to quaternary structure, interacts with the Sec translocase complex via SecD. Specifically interacts with transmembrane segments of nascent integral membrane proteins during membrane integration.

Its subcellular location is the cell inner membrane. Its function is as follows. Required for the insertion and/or proper folding and/or complex formation of integral membrane proteins into the membrane. Involved in integration of membrane proteins that insert both dependently and independently of the Sec translocase complex, as well as at least some lipoproteins. Aids folding of multispanning membrane proteins. This chain is Membrane protein insertase YidC, found in Saccharophagus degradans (strain 2-40 / ATCC 43961 / DSM 17024).